We begin with the raw amino-acid sequence, 590 residues long: MAFGYSPSYCSFWRTLLGLYCLFTLVHTVISTPPEDPVKCVSGNTNCIVTNSLGAFPDRSTCRAANVAYPTTEAELVSIVAAATKAGRKMRVTTRYSHSIPKLTCTDGNDGLFISTKFLNHTVQADAKAMTLTVESGVTLRQLIAEAAKVGLALPYAPYWWGVTVGGMMGTGAHGSSLWGKGSAVHDYVTEIRMVSPGSVNDGFAKIRVLSETTTPNEFNAAKVSLGVLGVISQVTFELQPMFKRSLKYVMRNDLDFNDEALTFGKKHEFADFVWLPSQGKVVYRMDDRVAVNTLGNGLYDFFPFRSQLSAVLATTRSSEETQETLRDAHGKCVTATTISSTLFSTSYGLTNNGITFTGYPVIGSQNRMMSSGSCLDGLEDKLTSACAWDSRVKGVFYHQTTFSIPLTQVKSFINDIKSLLKIDSKSLCGLELYYGILMRYVTSSPAYLGKETEAIDFDITYYRANDPLTPRLYEDFIEEIEQIALLKYNALPHWGKNRNLAFDGVIKKYKNAPAFLKVKESYDPNGLFSSEWTDQILGIKGNPTIVKDGCALEGLCICSDDAHCAPSKGYLCRPGKVYKEARVCTHVPK.

An N-terminal signal peptide occupies residues 1–31 (MAFGYSPSYCSFWRTLLGLYCLFTLVHTVIS). An FAD-binding PCMH-type domain is found at 60-242 (STCRAANVAY…SQVTFELQPM (183 aa)).

The protein belongs to the oxygen-dependent FAD-linked oxidoreductase family. FAD is required as a cofactor.

The catalysed reaction is L-gulono-1,4-lactone + O2 = L-ascorbate + H2O2 + H(+). Its pathway is cofactor biosynthesis; L-ascorbate biosynthesis. Functionally, catalyzes the oxidation of L-gulono-1,4-lactone to ascorbic acid. L-gulono-1,4-lactone is oxidized to hydrogen peroxide and L-xylo-hexulonolactone which spontaneously isomerizes to L-ascorbate. The protein is L-gulonolactone oxidase 5 of Arabidopsis thaliana (Mouse-ear cress).